Reading from the N-terminus, the 156-residue chain is MNLNATFFAQMVVFFILWWVVAKFIWPPLVKALDERAKKIADGLAAAEKGKAELELANKRVDQAMAEARTEGAQRVADAEKRAQLTADEIKQNAQAEAARIIAQAKAEAEQQVTRAREALRDQVAVLAVKGAEQILKREVNAQVHTDLLNQLKAEL.

Residues 7 to 27 (FFAQMVVFFILWWVVAKFIWP) traverse the membrane as a helical segment.

It belongs to the ATPase B chain family. As to quaternary structure, F-type ATPases have 2 components, F(1) - the catalytic core - and F(0) - the membrane proton channel. F(1) has five subunits: alpha(3), beta(3), gamma(1), delta(1), epsilon(1). F(0) has three main subunits: a(1), b(2) and c(10-14). The alpha and beta chains form an alternating ring which encloses part of the gamma chain. F(1) is attached to F(0) by a central stalk formed by the gamma and epsilon chains, while a peripheral stalk is formed by the delta and b chains.

The protein localises to the cell inner membrane. F(1)F(0) ATP synthase produces ATP from ADP in the presence of a proton or sodium gradient. F-type ATPases consist of two structural domains, F(1) containing the extramembraneous catalytic core and F(0) containing the membrane proton channel, linked together by a central stalk and a peripheral stalk. During catalysis, ATP synthesis in the catalytic domain of F(1) is coupled via a rotary mechanism of the central stalk subunits to proton translocation. In terms of biological role, component of the F(0) channel, it forms part of the peripheral stalk, linking F(1) to F(0). In Cupriavidus necator (strain ATCC 17699 / DSM 428 / KCTC 22496 / NCIMB 10442 / H16 / Stanier 337) (Ralstonia eutropha), this protein is ATP synthase subunit b.